The chain runs to 221 residues: Factor arrest protein 7 (221 aa).

Component of a complex at least composed of FAR3, FAR7, FAR8, FAR10, FAR11 and VPS64.

In terms of biological role, participates in the control of the reentry into the cell cycle following pheromone treatment. This chain is Factor arrest protein 7 (FAR7), found in Saccharomyces cerevisiae (strain ATCC 204508 / S288c) (Baker's yeast).